A 423-amino-acid polypeptide reads, in one-letter code: COP9 signalosome complex subunit 3 (423 aa).

Ala2 is modified (N-acetylalanine). Positions 197 to 365 (NFERALYFYE…GMVSFHDNPE (169 aa)) constitute a PCI domain. The segment at 402–423 (QFVQKSMGSQEDDSGNKPSSYS) is disordered. Residues Ser407, Ser410, and Ser423 each carry the phosphoserine modification.

It belongs to the CSN3 family. As to quaternary structure, component of the CSN complex, composed of COPS1/GPS1, COPS2, COPS3, COPS4, COPS5, COPS6, COPS7 (COPS7A or COPS7B), COPS8 and COPS9 isoform 1. In the complex, it probably interacts directly with COPS1, COPS4, COPS8 and COPS9 isoform 1. Interacts with CK2 and PKD. Interacts with the translation initiation factor EIF3S6 and IKBKG. Interacts with ERCC6. Widely expressed. Expressed at high level in heart and skeletal muscle.

It is found in the cytoplasm. Its subcellular location is the nucleus. Its function is as follows. Component of the COP9 signalosome complex (CSN), a complex involved in various cellular and developmental processes. The CSN complex is an essential regulator of the ubiquitin (Ubl) conjugation pathway by mediating the deneddylation of the cullin subunits of SCF-type E3 ligase complexes, leading to decrease the Ubl ligase activity of SCF-type complexes such as SCF, CSA or DDB2. The complex is also involved in phosphorylation of p53/TP53, c-jun/JUN, IkappaBalpha/NFKBIA, ITPK1 and IRF8/ICSBP, possibly via its association with CK2 and PKD kinases. CSN-dependent phosphorylation of TP53 and JUN promotes and protects degradation by the Ubl system, respectively. The chain is COP9 signalosome complex subunit 3 (COPS3) from Homo sapiens (Human).